The following is a 259-amino-acid chain: Sorbitol-6-phosphate 2-dehydrogenase (259 aa).

4–33 (VAVVIGGGQTLGAFLCHGLAAEGYRVAVVD) provides a ligand contact to NAD(+). Position 141 (Ser-141) interacts with substrate. Tyr-154 (proton acceptor) is an active-site residue.

The protein belongs to the short-chain dehydrogenases/reductases (SDR) family. As to quaternary structure, homotetramer.

It carries out the reaction D-sorbitol 6-phosphate + NAD(+) = beta-D-fructose 6-phosphate + NADH + H(+). It functions in the pathway carbohydrate metabolism; D-sorbitol degradation; D-fructose 6-phosphate from D-sorbitol 6-phosphate: step 1/1. The chain is Sorbitol-6-phosphate 2-dehydrogenase (srlD) from Escherichia coli (strain K12).